We begin with the raw amino-acid sequence, 306 residues long: Hydroxypyruvate reductase (306 aa).

Residues 152-153 (NI), aspartate 172, 228-230 (TAR), and aspartate 254 each bind NAD(+). Arginine 230 is an active-site residue. Residue glutamate 259 is part of the active site. The active-site Proton donor is histidine 280. 280 to 283 (HIGA) provides a ligand contact to NAD(+).

It belongs to the D-isomer specific 2-hydroxyacid dehydrogenase family.

The enzyme catalyses (R)-glycerate + NAD(+) = 3-hydroxypyruvate + NADH + H(+). The catalysed reaction is (R)-glycerate + NADP(+) = 3-hydroxypyruvate + NADPH + H(+). Involved in the degradation of L-serine via 3-hydroxypyruvate. Catalyzes the non-reversible reduction of 3-hydroxypyruvate to yield D-glycerate. In Thermotoga maritima (strain ATCC 43589 / DSM 3109 / JCM 10099 / NBRC 100826 / MSB8), this protein is Hydroxypyruvate reductase.